We begin with the raw amino-acid sequence, 347 residues long: 4-hydroxy-2-oxovalerate aldolase 2 (347 aa).

Residues Val-7–Ala-259 enclose the Pyruvate carboxyltransferase domain. Arg-15 to Asp-16 is a binding site for substrate. Residue Asp-16 coordinates Mn(2+). His-19 functions as the Proton acceptor in the catalytic mechanism. Substrate-binding residues include Ser-169 and His-198. Residues His-198 and His-200 each coordinate Mn(2+). Tyr-289 is a binding site for substrate.

This sequence belongs to the 4-hydroxy-2-oxovalerate aldolase family.

The catalysed reaction is (S)-4-hydroxy-2-oxopentanoate = acetaldehyde + pyruvate. The chain is 4-hydroxy-2-oxovalerate aldolase 2 from Mycobacterium marinum (strain ATCC BAA-535 / M).